The following is a 510-amino-acid chain: 2,3-bisphosphoglycerate-independent phosphoglycerate mutase (510 aa).

Residues D13 and S63 each contribute to the Mn(2+) site. The active-site Phosphoserine intermediate is the S63. Residues H124, 154–155, R186, R192, 262–265, and K334 contribute to the substrate site; these read RD and RADR. Residues D401, H405, D442, H443, and H461 each coordinate Mn(2+).

The protein belongs to the BPG-independent phosphoglycerate mutase family. Monomer. Requires Mn(2+) as cofactor.

The enzyme catalyses (2R)-2-phosphoglycerate = (2R)-3-phosphoglycerate. It participates in carbohydrate degradation; glycolysis; pyruvate from D-glyceraldehyde 3-phosphate: step 3/5. Its function is as follows. Catalyzes the interconversion of 2-phosphoglycerate and 3-phosphoglycerate. The chain is 2,3-bisphosphoglycerate-independent phosphoglycerate mutase from Vibrio campbellii (strain ATCC BAA-1116).